Reading from the N-terminus, the 127-residue chain is Large ribosomal subunit protein bL19 (127 aa).

The protein belongs to the bacterial ribosomal protein bL19 family.

This protein is located at the 30S-50S ribosomal subunit interface and may play a role in the structure and function of the aminoacyl-tRNA binding site. The sequence is that of Large ribosomal subunit protein bL19 from Bradyrhizobium sp. (strain BTAi1 / ATCC BAA-1182).